Reading from the N-terminus, the 942-residue chain is Inter alpha-trypsin inhibitor, heavy chain 4 (942 aa).

Positions 1–28 (MKSPAPAHMWNLVLFLPSLLAVLPTTTA) are cleaved as a signal peptide. One can recognise a VIT domain in the interval 29-148 (EKNGIDIYSL…KITFELIYQE (120 aa)). Asn-81 carries N-linked (GlcNAc...) asparagine glycosylation. Residues 274-457 (NVIFVIDKSG…LQLQDFYHEV (184 aa)) form the VWFA domain. Residues Asn-517 and Asn-577 are each glycosylated (N-linked (GlcNAc...) asparagine). A coiled-coil region spans residues 552–586 (TIQQQLEQRISASGAELEALEAQVLNLSLKYNFVT). Disordered regions lie at residues 658–698 (RQYI…SDFS) and 726–745 (EKSKESTIPEESPNPDHPQV). Pro residues predominate over residues 663 to 690 (PGFPGPPGPPGFPAPPGPPGFPAPPGPP). A glycan (O-linked (GalNAc...) threonine) is linked at Thr-732. Cysteines 761 and 937 form a disulfide. Residue Asn-874 is glycosylated (N-linked (GlcNAc...) asparagine).

Belongs to the ITIH family. In terms of assembly, interacts (via C-terminus) with DNAJC1 (via SANT 2 domain). Post-translationally, may be O-glycosylated. N-glycosylated. As to expression, highly expressed in liver. Weak expression in lung and heart.

Its subcellular location is the secreted. In terms of biological role, type II acute-phase protein (APP) involved in inflammatory responses to trauma. May also play a role in liver development or regeneration. The sequence is that of Inter alpha-trypsin inhibitor, heavy chain 4 (Itih4) from Mus musculus (Mouse).